The chain runs to 303 residues: Probable phytol kinase, chloroplastic (303 aa).

A chloroplast-targeting transit peptide spans 1–49 (MAAAAAWTGAASPNSLLLSRSPPHAAALAPSPGSSMRRRLLLGVGTPAV). 6 consecutive transmembrane segments (helical) span residues 98-118 (VVHV…SNST), 122-144 (YFAA…RLYT), 168-188 (YVLV…IGIV), 227-247 (FISG…LGYI), 254-274 (ALGK…VPVT), and 276-296 (VVDD…LLFS).

This sequence belongs to the polyprenol kinase family.

It localises to the plastid. The protein localises to the chloroplast membrane. The enzyme catalyses phytol + CTP = phytyl phosphate + CDP + H(+). Its pathway is cofactor biosynthesis; tocopherol biosynthesis. Involved in the activation and reutilization of phytol from chlorophyll degradation in plant metabolism, including tocopherol biosynthesis. Catalyzes the conversion of phytol to phytol monophosphate (PMP). The protein is Probable phytol kinase, chloroplastic of Zea mays (Maize).